The following is a 389-amino-acid chain: Xylose isomerase (389 aa).

Residues His101 and Asp104 contribute to the active site. Glu232, Glu268, His271, Asp296, Asp307, and Asp309 together coordinate Mg(2+).

It belongs to the xylose isomerase family. As to quaternary structure, homotetramer. Requires Mg(2+) as cofactor.

It is found in the cytoplasm. The enzyme catalyses alpha-D-xylose = alpha-D-xylulofuranose. The chain is Xylose isomerase from Lactococcus lactis subsp. cremoris (strain SK11).